The primary structure comprises 397 residues: Acetate kinase 2 (397 aa).

Position 10 (asparagine 10) interacts with Mg(2+). ATP is bound at residue lysine 17. Residue arginine 90 participates in substrate binding. Catalysis depends on aspartate 147, which acts as the Proton donor/acceptor. Residues histidine 207 to glycine 211, aspartate 281 to arginine 283, and glycine 329 to asparagine 333 each bind ATP. A Mg(2+)-binding site is contributed by glutamate 385.

The protein belongs to the acetokinase family. In terms of assembly, homodimer. Mg(2+) is required as a cofactor. Mn(2+) serves as cofactor.

The protein localises to the cytoplasm. It carries out the reaction acetate + ATP = acetyl phosphate + ADP. Its pathway is metabolic intermediate biosynthesis; acetyl-CoA biosynthesis; acetyl-CoA from acetate: step 1/2. Catalyzes the formation of acetyl phosphate from acetate and ATP. Can also catalyze the reverse reaction. This is Acetate kinase 2 from Vibrio vulnificus (strain CMCP6).